Consider the following 67-residue polypeptide: MGKVFFFVLMIAIIGSTFLIEEALGSLVGCPRPDFLPSWNRCKSCVCKNNKLKCPKILKGSLLKTAA.

The signal sequence occupies residues 1–25; sequence MGKVFFFVLMIAIIGSTFLIEEALG.

Belongs to the ant myrmeciitoxin-01 family. Homodimer; disulfide-linked. Contains 2 intrachain disulfide bonds (one per chain) and 1 interchain disulfide bond. As to expression, expressed by the venom gland.

The protein resides in the secreted. The protein is U-myrmeciitoxin(01)-Mg4a of Myrmecia gulosa (Red bulldog ant).